A 181-amino-acid polypeptide reads, in one-letter code: MSRKKKSRKPGAAGAPEFMVTRNRSESDVAGRLRKKDKKRKGLKAGGRNSEEGAQQKHGSSQVRDPRLGSKKKIPLIVEPAKKLTKQERRLSAEQELEMLENDAKLNVLLDRIESGENLGRGLQQYVDEKLDRIEQLMSQLGLLEPEAEEEFEDEAPVRKSRSDDDLLADFEDFDMDDYKG.

Disordered stretches follow at residues 1–75 (MSRK…KKIP) and 145–181 (EPEAEEEFEDEAPVRKSRSDDDLLADFEDFDMDDYKG). The segment covering 32 to 43 (RLRKKDKKRKGL) has biased composition (basic residues). The span at 146–155 (PEAEEEFEDE) shows a compositional bias: acidic residues. Residues 156 to 165 (APVRKSRSDD) show a composition bias toward basic and acidic residues. Acidic residues predominate over residues 166-181 (DLLADFEDFDMDDYKG).

This sequence belongs to the YihI family. In terms of assembly, interacts with Der.

A GTPase-activating protein (GAP) that modifies Der/EngA GTPase function. May play a role in ribosome biogenesis. The polypeptide is Der GTPase-activating protein YihI (Vibrio vulnificus (strain YJ016)).